The primary structure comprises 575 residues: Transcription factor collier (575 aa).

Residues 79–82 form an interaction with DNA region; that stretch reads RKSN. Residues 167 to 186 form a C5-type zinc finger; sequence CRVLLTHEVMCSRCCDKKSC. Interaction with DNA stretches follow at residues 213–220 and 252–255; these read NCLKNAGN and NNSK. The segment at 255-278 is disordered; sequence KHGRRAKRLDTTEGTGNTSLSISG. Polar residues predominate over residues 266–276; that stretch reads TEGTGNTSLSI. The region spanning 299–382 is the IPT/TIG domain; that stretch reads PCIKAISPSE…KGSPGRFVYV (84 aa). Disordered stretches follow at residues 456–492 and 546–575; these read GQWTEDDYQRAQSSSVSPRGGYCSSASTPHSSGGSYG and AATAHPHHHYPHPHQPWHNPAVSAATAAAV. A compositionally biased stretch (low complexity) spans 479–492; that stretch reads SSASTPHSSGGSYG. The segment covering 546–557 has biased composition (basic residues); the sequence is AATAHPHHHYPH. The span at 561-575 shows a compositional bias: low complexity; it reads PWHNPAVSAATAAAV.

It belongs to the COE family. Its expression at the blastoderm stage is restricted to a single stripe of cells corresponding to part of the intercalary and mandibular segment primordia, possibly parasegment O.

It localises to the nucleus. In terms of biological role, may act as a 'second-level regulator' of head patterning. Required for establishment of the PS(-1)/PS0 parasegmental border and formation of the intercalary segment. Required for expression of the segment polarity genes hedgehog, engrailed and wingless, and the segment-identity genes CAP and collar in the intercalary segment. Required at the onset of the gastrulation for the correct formation of the mandibular segment. The protein is Transcription factor collier (kn) of Drosophila melanogaster (Fruit fly).